A 391-amino-acid polypeptide reads, in one-letter code: Probable dual-specificity RNA methyltransferase RlmN (391 aa).

Residues 1-33 (MTTPLDTPTREPLPLAPAGPGKLVMSAPRRGKP) are disordered. Over residues 12 to 21 (PLPLAPAGPG) the composition is skewed to low complexity. Glu124 serves as the catalytic Proton acceptor. A Radical SAM core domain is found at 130–373 (YKNRDTICIS…TTVRDTRGSD (244 aa)). Residues Cys137 and Cys378 are joined by a disulfide bond. [4Fe-4S] cluster contacts are provided by Cys144, Cys148, and Cys151. S-adenosyl-L-methionine-binding positions include 199 to 200 (GE), Ser233, 256 to 258 (SLH), and Asn335. Cys378 (S-methylcysteine intermediate) is an active-site residue.

It belongs to the radical SAM superfamily. RlmN family. [4Fe-4S] cluster is required as a cofactor.

It is found in the cytoplasm. The enzyme catalyses adenosine(2503) in 23S rRNA + 2 reduced [2Fe-2S]-[ferredoxin] + 2 S-adenosyl-L-methionine = 2-methyladenosine(2503) in 23S rRNA + 5'-deoxyadenosine + L-methionine + 2 oxidized [2Fe-2S]-[ferredoxin] + S-adenosyl-L-homocysteine. It catalyses the reaction adenosine(37) in tRNA + 2 reduced [2Fe-2S]-[ferredoxin] + 2 S-adenosyl-L-methionine = 2-methyladenosine(37) in tRNA + 5'-deoxyadenosine + L-methionine + 2 oxidized [2Fe-2S]-[ferredoxin] + S-adenosyl-L-homocysteine. Specifically methylates position 2 of adenine 2503 in 23S rRNA and position 2 of adenine 37 in tRNAs. The protein is Probable dual-specificity RNA methyltransferase RlmN of Kineococcus radiotolerans (strain ATCC BAA-149 / DSM 14245 / SRS30216).